The chain runs to 329 residues: Phenylalanine--tRNA ligase alpha subunit (329 aa).

The protein belongs to the class-II aminoacyl-tRNA synthetase family. Phe-tRNA synthetase alpha subunit type 1 subfamily. Tetramer of two alpha and two beta subunits. The cofactor is Mg(2+).

The protein resides in the cytoplasm. The enzyme catalyses tRNA(Phe) + L-phenylalanine + ATP = L-phenylalanyl-tRNA(Phe) + AMP + diphosphate + H(+). This chain is Phenylalanine--tRNA ligase alpha subunit (pheS), found in Buchnera aphidicola subsp. Acyrthosiphon pisum (strain APS) (Acyrthosiphon pisum symbiotic bacterium).